Here is a 284-residue protein sequence, read N- to C-terminus: Acetylglutamate kinase (284 aa).

Substrate-binding positions include 64 to 65 (GG), arginine 86, and asparagine 177.

The protein belongs to the acetylglutamate kinase family. ArgB subfamily.

The protein resides in the cytoplasm. It catalyses the reaction N-acetyl-L-glutamate + ATP = N-acetyl-L-glutamyl 5-phosphate + ADP. Its pathway is amino-acid biosynthesis; L-arginine biosynthesis; N(2)-acetyl-L-ornithine from L-glutamate: step 2/4. In terms of biological role, catalyzes the ATP-dependent phosphorylation of N-acetyl-L-glutamate. The polypeptide is Acetylglutamate kinase (Haemophilus ducreyi (strain 35000HP / ATCC 700724)).